A 373-amino-acid polypeptide reads, in one-letter code: NAD(P)H-quinone oxidoreductase subunit 1 (373 aa).

8 helical membrane passes run 28-48 (LLWLPLPMLLVLVAAVVGVLV), 98-118 (LLFTLGPVLVVVPVIISWLII), 129-149 (VGVGIFLWISFSSIQPIGLLM), 177-197 (LALAVLAIVMMTNSLSTVDIV), 205-225 (ILSWNIWRQPVGFLIFWICAL), 267-287 (VLSAVLVSVLYLGGWGFPIPV), 309-329 (TVGIVMTVLKAYLLVFVAILL), and 348-368 (FLLPLSLVNLLVTAALKLAFP).

It belongs to the complex I subunit 1 family. NDH-1 is composed of at least 11 different subunits.

The protein localises to the cellular thylakoid membrane. The catalysed reaction is a plastoquinone + NADH + (n+1) H(+)(in) = a plastoquinol + NAD(+) + n H(+)(out). The enzyme catalyses a plastoquinone + NADPH + (n+1) H(+)(in) = a plastoquinol + NADP(+) + n H(+)(out). NDH-1 shuttles electrons from an unknown electron donor, via FMN and iron-sulfur (Fe-S) centers, to quinones in the respiratory and/or the photosynthetic chain. The immediate electron acceptor for the enzyme in this species is believed to be plastoquinone. Couples the redox reaction to proton translocation, and thus conserves the redox energy in a proton gradient. The protein is NAD(P)H-quinone oxidoreductase subunit 1 of Synechococcus sp. (strain CC9605).